The chain runs to 244 residues: Phosphoadenosine 5'-phosphosulfate reductase (244 aa).

Cys-239 (nucleophile; cysteine thiosulfonate intermediate) is an active-site residue.

This sequence belongs to the PAPS reductase family. CysH subfamily.

It is found in the cytoplasm. It carries out the reaction [thioredoxin]-disulfide + sulfite + adenosine 3',5'-bisphosphate + 2 H(+) = [thioredoxin]-dithiol + 3'-phosphoadenylyl sulfate. The protein operates within sulfur metabolism; hydrogen sulfide biosynthesis; sulfite from sulfate: step 3/3. Functionally, catalyzes the formation of sulfite from phosphoadenosine 5'-phosphosulfate (PAPS) using thioredoxin as an electron donor. This is Phosphoadenosine 5'-phosphosulfate reductase from Serratia proteamaculans (strain 568).